The following is a 1020-amino-acid chain: UPF0182 protein jk1603 (1020 aa).

The span at 1-18 shows a compositional bias: pro residues; sequence MSTPTPPSSGRPKQPFPS. The disordered stretch occupies residues 1–23; it reads MSTPTPPSSGRPKQPFPSSPGSS. 7 helical membrane-spanning segments follow: residues 28–48, 73–93, 125–145, 175–195, 227–247, 272–292, and 300–320; these read ILGI…VVVS, LVLF…AAFL, FLVG…QSNW, LPFL…AFVI, LAVI…FDRY, QIVL…TIVL, and LAVA…PAML. Residues 924–998 form a disordered region; it reads QEIDGSVVDP…KVNKTRESGT (75 aa). Composition is skewed to basic and acidic residues over residues 942–961 and 969–998; these read KGDK…EQSS and KSDD…ESGT.

It belongs to the UPF0182 family.

It localises to the cell membrane. This Corynebacterium jeikeium (strain K411) protein is UPF0182 protein jk1603.